Here is a 344-residue protein sequence, read N- to C-terminus: Acireductone dioxygenase (344 aa).

His-92, His-94, Glu-98, and His-137 together coordinate Fe(2+). Ni(2+) contacts are provided by His-92, His-94, Glu-98, and His-137.

The protein belongs to the acireductone dioxygenase (ARD) family. Fe(2+) serves as cofactor. The cofactor is Ni(2+).

It is found in the cytoplasm. The protein resides in the nucleus. The enzyme catalyses 1,2-dihydroxy-5-(methylsulfanyl)pent-1-en-3-one + O2 = 4-methylsulfanyl-2-oxobutanoate + formate + 2 H(+). It carries out the reaction 1,2-dihydroxy-5-(methylsulfanyl)pent-1-en-3-one + O2 = 3-(methylsulfanyl)propanoate + CO + formate + 2 H(+). It participates in amino-acid biosynthesis; L-methionine biosynthesis via salvage pathway; L-methionine from S-methyl-5-thio-alpha-D-ribose 1-phosphate: step 5/6. Its function is as follows. Catalyzes 2 different reactions between oxygen and the acireductone 1,2-dihydroxy-3-keto-5-methylthiopentene (DHK-MTPene) depending upon the metal bound in the active site. Fe-containing acireductone dioxygenase (Fe-ARD) produces formate and 2-keto-4-methylthiobutyrate (KMTB), the alpha-ketoacid precursor of methionine in the methionine recycle pathway. Ni-containing acireductone dioxygenase (Ni-ARD) produces methylthiopropionate, carbon monoxide and formate, and does not lie on the methionine recycle pathway. The protein is Acireductone dioxygenase of Leishmania major.